Here is a 103-residue protein sequence, read N- to C-terminus: Large ribosomal subunit protein bL21 (103 aa).

This sequence belongs to the bacterial ribosomal protein bL21 family. As to quaternary structure, part of the 50S ribosomal subunit. Contacts protein L20.

Functionally, this protein binds to 23S rRNA in the presence of protein L20. This Acinetobacter baylyi (strain ATCC 33305 / BD413 / ADP1) protein is Large ribosomal subunit protein bL21.